A 585-amino-acid chain; its full sequence is Packaging protein UL32 (585 aa).

The segment at 1–25 (MDRVESEEPMDGFESPVFSENTSSN) is disordered. Zn(2+) contacts are provided by Cys-107, Cys-110, His-187, Cys-193, Cys-408, Cys-411, His-484, and Cys-491. Zinc finger stretches follow at residues 107 to 193 (CLVC…LHVC) and 408 to 491 (CMLC…DLLC).

This sequence belongs to the herpesviridae UL32 protein family.

The protein resides in the host cytoplasm. It localises to the host nucleus. Its function is as follows. Plays a role in efficient localization of neo-synthesized capsids to nuclear replication compartments, thereby controlling cleavage and packaging of virus genomic DNA. In Varicella-zoster virus (strain Dumas) (HHV-3), this protein is Packaging protein UL32 (26).